A 198-amino-acid chain; its full sequence is Guanylate kinase (198 aa).

In terms of domain architecture, Guanylate kinase-like spans 4–186 (PRPVVLSGPS…AYATLKQALS (183 aa)). ATP is bound at residue 14–19 (GAGKST). 37 to 51 (SHTTRNPRPGEEDGK) lines the substrate pocket. Residues Arg44, Arg137, and Arg148 contribute to the active site. 171-172 (ND) is an ATP binding site.

It belongs to the guanylate kinase family. In terms of assembly, monomer. Interacts with RD3. Widely expressed. In retina is expressed in inner segment, outer nuclear layer, outer plexiform layer, inner plexiform layer, and ganglion cell layer (at protein level).

It localises to the photoreceptor inner segment. The protein localises to the cytoplasm. It is found in the cytosol. The protein resides in the mitochondrion. The catalysed reaction is GMP + ATP = GDP + ADP. Functionally, catalyzes the phosphorylation of GMP to GDP. Essential enzyme for recycling GMP and indirectly, cyclic GMP (cGMP). Involved in the cGMP metabolism in photoreceptors. The chain is Guanylate kinase from Mus musculus (Mouse).